We begin with the raw amino-acid sequence, 444 residues long: Trigger factor (444 aa).

The PPIase FKBP-type domain maps to 163–248 (GDFLTVDFVG…AKALKKAVAP (86 aa)).

It belongs to the FKBP-type PPIase family. Tig subfamily.

Its subcellular location is the cytoplasm. It catalyses the reaction [protein]-peptidylproline (omega=180) = [protein]-peptidylproline (omega=0). Involved in protein export. Acts as a chaperone by maintaining the newly synthesized protein in an open conformation. Functions as a peptidyl-prolyl cis-trans isomerase. This is Trigger factor from Granulibacter bethesdensis (strain ATCC BAA-1260 / CGDNIH1).